Here is a 307-residue protein sequence, read N- to C-terminus: UDP-N-acetylenolpyruvoylglucosamine reductase (307 aa).

The FAD-binding PCMH-type domain maps to 33–197 (TGGNADFYIT…LEAAFTLAPG (165 aa)). Arg176 is a catalytic residue. Ser226 serves as the catalytic Proton donor. The active site involves Glu296.

Belongs to the MurB family. The cofactor is FAD.

It localises to the cytoplasm. The enzyme catalyses UDP-N-acetyl-alpha-D-muramate + NADP(+) = UDP-N-acetyl-3-O-(1-carboxyvinyl)-alpha-D-glucosamine + NADPH + H(+). The protein operates within cell wall biogenesis; peptidoglycan biosynthesis. Cell wall formation. In Staphylococcus aureus (strain NCTC 8325 / PS 47), this protein is UDP-N-acetylenolpyruvoylglucosamine reductase.